The following is a 369-amino-acid chain: MLIQYHKISNNDPNRIQLLSMIFCEIILLIFELFEFAAIIFNMSRYQFHFNLKVVVGYAIFAYWFDIIARITIAFFEIGLFNLDDQTIAVETEKLPWNYKNMFFMLLFCCSTYRVYFMFLICSVTLLLAVERFLATIWVSTYESVQHKWVSIVLTSTNSIAGIFGSLLFHYELIFDTAVWCSLGLCFNFVSIFLYVILFNSNKSKIELCQTREITQSYTLSLRFQLNENLKIMNWIKNSILVVTCFNTLLAGFLIASNNEYLKNDYPVLVKCCHTFLNLGIAIYAQVVFFVAILADRHFRTYFLRFKPIRVFTKPFFGRIFPEDFKIKKILSTSDETNVYFSKLSLQWDEQIIRSSHVVVAKKKRFWRV.

Over 1 to 20 the chain is Extracellular; the sequence is MLIQYHKISNNDPNRIQLLS. A helical membrane pass occupies residues 21–41; the sequence is MIFCEIILLIFELFEFAAIIF. The Cytoplasmic portion of the chain corresponds to 42-55; it reads NMSRYQFHFNLKVV. Residues 56 to 76 traverse the membrane as a helical segment; it reads VGYAIFAYWFDIIARITIAFF. Residues 77–118 are Extracellular-facing; the sequence is EIGLFNLDDQTIAVETEKLPWNYKNMFFMLLFCCSTYRVYFM. The helical transmembrane segment at 119-139 threads the bilayer; the sequence is FLICSVTLLLAVERFLATIWV. Over 140–148 the chain is Cytoplasmic; sequence STYESVQHK. Residues 149-169 traverse the membrane as a helical segment; the sequence is WVSIVLTSTNSIAGIFGSLLF. Residues 170-178 lie on the Extracellular side of the membrane; sequence HYELIFDTA. The helical transmembrane segment at 179-199 threads the bilayer; it reads VWCSLGLCFNFVSIFLYVILF. At 200–234 the chain is on the cytoplasmic side; it reads NSNKSKIELCQTREITQSYTLSLRFQLNENLKIMN. Residues 235–255 traverse the membrane as a helical segment; that stretch reads WIKNSILVVTCFNTLLAGFLI. Residues 256–274 lie on the Extracellular side of the membrane; the sequence is ASNNEYLKNDYPVLVKCCH. Residues 275-295 form a helical membrane-spanning segment; sequence TFLNLGIAIYAQVVFFVAILA. Over 296-369 the chain is Cytoplasmic; the sequence is DRHFRTYFLR…VAKKKRFWRV (74 aa).

The protein belongs to the nematode receptor-like protein sre family.

The protein localises to the cell membrane. This is Serpentine receptor class epsilon-2 (sre-2) from Caenorhabditis elegans.